Consider the following 275-residue polypeptide: 4-hydroxy-tetrahydrodipicolinate reductase (275 aa).

Residue 12-17 (GAAGRM) participates in NAD(+) binding. Arginine 39 contributes to the NADP(+) binding site. Residues 102–104 (GTT) and 126–129 (SGNM) contribute to the NAD(+) site. Histidine 160 functions as the Proton donor/acceptor in the catalytic mechanism. Histidine 161 serves as a coordination point for (S)-2,3,4,5-tetrahydrodipicolinate. Residue lysine 164 is the Proton donor of the active site. 170–171 (GT) lines the (S)-2,3,4,5-tetrahydrodipicolinate pocket.

The protein belongs to the DapB family.

The protein resides in the cytoplasm. It carries out the reaction (S)-2,3,4,5-tetrahydrodipicolinate + NAD(+) + H2O = (2S,4S)-4-hydroxy-2,3,4,5-tetrahydrodipicolinate + NADH + H(+). It catalyses the reaction (S)-2,3,4,5-tetrahydrodipicolinate + NADP(+) + H2O = (2S,4S)-4-hydroxy-2,3,4,5-tetrahydrodipicolinate + NADPH + H(+). Its pathway is amino-acid biosynthesis; L-lysine biosynthesis via DAP pathway; (S)-tetrahydrodipicolinate from L-aspartate: step 4/4. Catalyzes the conversion of 4-hydroxy-tetrahydrodipicolinate (HTPA) to tetrahydrodipicolinate. In Agrobacterium fabrum (strain C58 / ATCC 33970) (Agrobacterium tumefaciens (strain C58)), this protein is 4-hydroxy-tetrahydrodipicolinate reductase.